A 611-amino-acid polypeptide reads, in one-letter code: Dihydroxy-acid dehydratase (611 aa).

Mg(2+) is bound at residue Asp81. Cys122 contributes to the [2Fe-2S] cluster binding site. Residues Asp123 and Lys124 each coordinate Mg(2+). Residue Lys124 is modified to N6-carboxylysine. Cys195 lines the [2Fe-2S] cluster pocket. Glu491 contributes to the Mg(2+) binding site. Catalysis depends on Ser517, which acts as the Proton acceptor.

It belongs to the IlvD/Edd family. Homodimer. [2Fe-2S] cluster serves as cofactor. Mg(2+) is required as a cofactor.

It carries out the reaction (2R)-2,3-dihydroxy-3-methylbutanoate = 3-methyl-2-oxobutanoate + H2O. The enzyme catalyses (2R,3R)-2,3-dihydroxy-3-methylpentanoate = (S)-3-methyl-2-oxopentanoate + H2O. Its pathway is amino-acid biosynthesis; L-isoleucine biosynthesis; L-isoleucine from 2-oxobutanoate: step 3/4. It functions in the pathway amino-acid biosynthesis; L-valine biosynthesis; L-valine from pyruvate: step 3/4. Functions in the biosynthesis of branched-chain amino acids. Catalyzes the dehydration of (2R,3R)-2,3-dihydroxy-3-methylpentanoate (2,3-dihydroxy-3-methylvalerate) into 2-oxo-3-methylpentanoate (2-oxo-3-methylvalerate) and of (2R)-2,3-dihydroxy-3-methylbutanoate (2,3-dihydroxyisovalerate) into 2-oxo-3-methylbutanoate (2-oxoisovalerate), the penultimate precursor to L-isoleucine and L-valine, respectively. The chain is Dihydroxy-acid dehydratase from Glaesserella parasuis serovar 5 (strain SH0165) (Haemophilus parasuis).